Reading from the N-terminus, the 228-residue chain is tRNA (guanine-N(1)-)-methyltransferase (228 aa).

S-adenosyl-L-methionine is bound by residues Gly111 and 135-140 (LGDYVL).

It belongs to the RNA methyltransferase TrmD family. As to quaternary structure, homodimer.

Its subcellular location is the cytoplasm. The enzyme catalyses guanosine(37) in tRNA + S-adenosyl-L-methionine = N(1)-methylguanosine(37) in tRNA + S-adenosyl-L-homocysteine + H(+). Functionally, specifically methylates guanosine-37 in various tRNAs. The protein is tRNA (guanine-N(1)-)-methyltransferase of Clavibacter sepedonicus (Clavibacter michiganensis subsp. sepedonicus).